A 391-amino-acid polypeptide reads, in one-letter code: mRNA-capping enzyme subunit alpha (391 aa).

The N6-GMP-lysine intermediate role is filled by Lys-63. Residues 363–391 (KERNRRPRDEDRKRVGGDDHDHGAKRARQ) form a disordered region.

Belongs to the eukaryotic GTase family. Heterodimer. The mRNA-capping enzyme is composed of two separate chains alpha and beta, respectively a mRNA guanylyltransferase and an mRNA 5'-triphosphate monophosphatase.

It localises to the nucleus. The enzyme catalyses a 5'-end diphospho-ribonucleoside in mRNA + GTP + H(+) = a 5'-end (5'-triphosphoguanosine)-ribonucleoside in mRNA + diphosphate. Its function is as follows. Second step of mRNA capping. Transfer of the GMP moiety of GTP to the 5'-end of RNA via an enzyme-GMP covalent reaction intermediate. This chain is mRNA-capping enzyme subunit alpha (CEG1), found in Yarrowia lipolytica (strain CLIB 122 / E 150) (Yeast).